The chain runs to 242 residues: Probable derlin-1 homolog (242 aa).

The Cytoplasmic segment spans residues 1–18 (MDGVKEWFNSIPPVSRYM). A helical membrane pass occupies residues 19 to 39 (FAIFLGIPVLAAMHLISFNYL). Topologically, residues 40–98 (YLDFTFTFKHFHLWRLITAPCIISSLGPMFLFNLIFFYQYTTRLESLNYAGKSDDYLFC) are lumenal. Residues 99–119 (IIFISICNIIFGLIFEYYFLG) traverse the membrane as a helical segment. The Cytoplasmic portion of the chain corresponds to 120-140 (TMTIMSLIYIYSRMNPTGTSN). Residues 141-161 (FYGFFSFKTIYLPWVFLVAHF) traverse the membrane as a helical segment. Residues 162–167 (LQTGHP) are Lumenal-facing. The chain crosses the membrane as a helical span at residues 168–188 (PYSDFLAIVSGHIFFYLTDIY). Residues 189–242 (PRANGVPALIKTPKFITNIFNKGDRNPNNVRRDPRTGRPIQEGGYNWGQGHALG) are Cytoplasmic-facing. Residues 214-224 (NPNNVRRDPRT) show a composition bias toward basic and acidic residues. A disordered region spans residues 214-242 (NPNNVRRDPRTGRPIQEGGYNWGQGHALG). Over residues 233–242 (YNWGQGHALG) the composition is skewed to gly residues.

It belongs to the derlin family.

Its subcellular location is the endoplasmic reticulum membrane. Functionally, may be involved in the degradation process of specific misfolded endoplasmic reticulum (ER) luminal proteins. May also involved in endoplasmic reticulum stress-induced pre-emptive quality control, a mechanism that selectively attenuates the translocation of newly synthesized proteins into the endoplasmic reticulum and reroutes them to the cytosol for proteasomal degradation. The polypeptide is Probable derlin-1 homolog (Dictyostelium discoideum (Social amoeba)).